Reading from the N-terminus, the 197-residue chain is Holliday junction branch migration complex subunit RuvA (197 aa).

The domain I stretch occupies residues 1–64 (MYDYIKGIYK…DDSINLYGFF (64 aa)). A domain II region spans residues 65-143 (TEEERDMFNL…NDDIISDIDD (79 aa)). Residues 144 to 154 (LDSISNFQLHS) form a flexible linker region. The tract at residues 154 to 197 (SAEALEALMSLGYSQKESEKALKNVDKENSLEDIIKACLKYLMG) is domain III.

It belongs to the RuvA family. In terms of assembly, homotetramer. Forms an RuvA(8)-RuvB(12)-Holliday junction (HJ) complex. HJ DNA is sandwiched between 2 RuvA tetramers; dsDNA enters through RuvA and exits via RuvB. An RuvB hexamer assembles on each DNA strand where it exits the tetramer. Each RuvB hexamer is contacted by two RuvA subunits (via domain III) on 2 adjacent RuvB subunits; this complex drives branch migration. In the full resolvosome a probable DNA-RuvA(4)-RuvB(12)-RuvC(2) complex forms which resolves the HJ.

Its subcellular location is the cytoplasm. The RuvA-RuvB-RuvC complex processes Holliday junction (HJ) DNA during genetic recombination and DNA repair, while the RuvA-RuvB complex plays an important role in the rescue of blocked DNA replication forks via replication fork reversal (RFR). RuvA specifically binds to HJ cruciform DNA, conferring on it an open structure. The RuvB hexamer acts as an ATP-dependent pump, pulling dsDNA into and through the RuvAB complex. HJ branch migration allows RuvC to scan DNA until it finds its consensus sequence, where it cleaves and resolves the cruciform DNA. This chain is Holliday junction branch migration complex subunit RuvA, found in Clostridium tetani (strain Massachusetts / E88).